Here is a 108-residue protein sequence, read N- to C-terminus: UPF0060 membrane protein KPK_2870 (108 aa).

The next 4 helical transmembrane spans lie at L6–L26, G29–L49, A61–V81, and Y86–G106.

The protein belongs to the UPF0060 family.

It is found in the cell inner membrane. In Klebsiella pneumoniae (strain 342), this protein is UPF0060 membrane protein KPK_2870.